We begin with the raw amino-acid sequence, 265 residues long: Sulfur carrier protein FdhD (265 aa).

Cys-107 serves as the catalytic Cysteine persulfide intermediate.

It belongs to the FdhD family.

It localises to the cytoplasm. Functionally, required for formate dehydrogenase (FDH) activity. Acts as a sulfur carrier protein that transfers sulfur from IscS to the molybdenum cofactor prior to its insertion into FDH. This Staphylococcus aureus (strain bovine RF122 / ET3-1) protein is Sulfur carrier protein FdhD.